Here is a 460-residue protein sequence, read N- to C-terminus: WD repeat-containing protein 41 (460 aa).

6 WD repeats span residues 40–79 (EAHR…KLLE), 82–128 (GHTQ…QIQR), 131–168 (CFQS…LCKT), 220–258 (DHQD…VQAC), 321–359 (AHDS…QLAA), and 403–441 (GHSS…SGVR).

As to quaternary structure, component of the C9orf72-SMCR8 complex, at least composed of C9orf72, SMCR8 and WDR41. The complex is formed of two protomers, each individually consisting of one molecule each of C9orf72, SMCR8 and WDR41. The protomers homodimerize via an interaction between C9orf72 (via C-terminus) and SMCR8 (via N-terminus). Within each protomer SMCR8 (via DENN domain) acts as a bridging protein between WDR41 (via C-terminus and N-terminus) and C9orf72 (via C-terminus). The C9orf72-SMCR8 complex associates with the ULK1/ATG1 kinase complex.

It is found in the cytoplasm. In terms of biological role, non-catalytic component of the C9orf72-SMCR8 complex, a complex that has guanine nucleotide exchange factor (GEF) activity and regulates autophagy. The C9orf72-SMCR8 complex promotes the exchange of GDP to GTP, converting inactive GDP-bound RAB8A and RAB39B into their active GTP-bound form, thereby promoting autophagosome maturation. As part of the C9orf72-SMCR8 complex, stimulates RAB8A and RAB11A GTPase activity in vitro, however WDR42 is shown not be an essential complex component for this function. The C9orf72-SMCR8 complex also acts as a negative regulator of autophagy initiation by interacting with the ULK1/ATG1 kinase complex and inhibiting its protein kinase activity. The sequence is that of WD repeat-containing protein 41 from Mus musculus (Mouse).